Here is a 485-residue protein sequence, read N- to C-terminus: Glutamate--tRNA ligase (485 aa).

Positions 12–22 (PSPTGEPHVGT) match the 'HIGH' region motif. A 'KMSKS' region motif is present at residues 253-257 (KLSKR). Lysine 256 serves as a coordination point for ATP.

It belongs to the class-I aminoacyl-tRNA synthetase family. Glutamate--tRNA ligase type 1 subfamily. Monomer.

It is found in the cytoplasm. The catalysed reaction is tRNA(Glu) + L-glutamate + ATP = L-glutamyl-tRNA(Glu) + AMP + diphosphate. Catalyzes the attachment of glutamate to tRNA(Glu) in a two-step reaction: glutamate is first activated by ATP to form Glu-AMP and then transferred to the acceptor end of tRNA(Glu). The polypeptide is Glutamate--tRNA ligase (Rhizobium meliloti (strain 1021) (Ensifer meliloti)).